A 959-amino-acid chain; its full sequence is Probable LRR receptor-like serine/threonine-protein kinase At5g37450 (959 aa).

An N-terminal signal peptide occupies residues M1–A24. Residues Q25–G565 are Extracellular-facing. N62, N88, N102, and N123 each carry an N-linked (GlcNAc...) asparagine glycan. 9 LRR repeats span residues V79–L100, S101–L124, T125–L148, S149–L172, K173–N198, L200–M220, P221–S244, P246–S268, and L269–A292. N-linked (GlcNAc...) asparagine glycosylation occurs at N182. N-linked (GlcNAc...) asparagine glycans are attached at residues N293, N311, N327, N358, N369, and N510. LRR repeat units lie at residues I294–G314, L315–N338, and L341–P366. The chain crosses the membrane as a helical span at residues I566 to I586. The Cytoplasmic segment spans residues K587–R959. One can recognise a Protein kinase domain in the interval F631 to I906. ATP contacts are provided by residues I637–V645 and K659. The Proton acceptor role is filled by D755.

Belongs to the protein kinase superfamily. Ser/Thr protein kinase family.

It is found in the membrane. It carries out the reaction L-seryl-[protein] + ATP = O-phospho-L-seryl-[protein] + ADP + H(+). It catalyses the reaction L-threonyl-[protein] + ATP = O-phospho-L-threonyl-[protein] + ADP + H(+). In Arabidopsis thaliana (Mouse-ear cress), this protein is Probable LRR receptor-like serine/threonine-protein kinase At5g37450.